The chain runs to 125 residues: uncharacterized protein (125 aa).

One can recognise a PRD domain in the interval 15–121 (QINQSIIDVI…HSLVLEQKQL (107 aa)).

This is an uncharacterized protein from Haemophilus influenzae (strain ATCC 51907 / DSM 11121 / KW20 / Rd).